The following is a 102-amino-acid chain: Large ribosomal subunit protein bL21 (102 aa).

Belongs to the bacterial ribosomal protein bL21 family. In terms of assembly, part of the 50S ribosomal subunit. Contacts protein L20.

Functionally, this protein binds to 23S rRNA in the presence of protein L20. This is Large ribosomal subunit protein bL21 from Photorhabdus laumondii subsp. laumondii (strain DSM 15139 / CIP 105565 / TT01) (Photorhabdus luminescens subsp. laumondii).